Reading from the N-terminus, the 486-residue chain is Galactose-1-phosphate uridylyltransferase (486 aa).

This sequence belongs to the galactose-1-phosphate uridylyltransferase type 2 family.

The protein localises to the cytoplasm. The enzyme catalyses alpha-D-galactose 1-phosphate + UDP-alpha-D-glucose = alpha-D-glucose 1-phosphate + UDP-alpha-D-galactose. Its pathway is carbohydrate metabolism; galactose metabolism. This Lacticaseibacillus casei (strain BL23) (Lactobacillus casei) protein is Galactose-1-phosphate uridylyltransferase.